Consider the following 489-residue polypeptide: Poly(A) RNA polymerase GLD2 (489 aa).

Positions 93–118 (RQRFSCPSPHNQSARNSNFTSQPVTR) are disordered. The span at 100–116 (SPHNQSARNSNFTSQPV) shows a compositional bias: polar residues. Positions 219 and 221 each coordinate Mg(2+). Residues 386–440 (SLGDLFLGFLRYYATVFKWDKQVISVRMARTLPKSNCKEWKDKFICVEEPFNRTN) form the PAP-associated domain.

It belongs to the DNA polymerase type-B-like family. GLD2 subfamily. Requires Mg(2+) as cofactor. The cofactor is Mn(2+).

Its subcellular location is the cytoplasm. It carries out the reaction RNA(n) + ATP = RNA(n)-3'-adenine ribonucleotide + diphosphate. Cytoplasmic poly(A) RNA polymerase that adds successive AMP monomers to the 3'-end of specific RNAs, forming a poly(A) tail. In contrast to the canonical nuclear poly(A) RNA polymerase, it only adds poly(A) to selected cytoplasmic mRNAs. May not play a role in replication-dependent histone mRNA degradation. This Danio rerio (Zebrafish) protein is Poly(A) RNA polymerase GLD2.